Here is a 129-residue protein sequence, read N- to C-terminus: Ubiquinol-cytochrome-c reductase complex assembly factor 2 (129 aa).

Residues 1-13 (MSATRYRRFLKLC) constitute a mitochondrion transit peptide.

It is found in the mitochondrion matrix. Its subcellular location is the mitochondrion nucleoid. The protein resides in the mitochondrion. Required for the assembly of the ubiquinol-cytochrome c reductase complex (mitochondrial respiratory chain complex III or cytochrome b-c1 complex). May play a role in the modulation of respiratory chain activities such as oxygen consumption and ATP production. May be involved in cytochrome b translation and/or stability. The polypeptide is Ubiquinol-cytochrome-c reductase complex assembly factor 2 (uqcc2) (Danio rerio (Zebrafish)).